Reading from the N-terminus, the 560-residue chain is Putative transport protein ESA_02488 (560 aa).

A run of 5 helical transmembrane segments spans residues 8 to 28 (LLNG…LCLG), 32 to 52 (LGSV…LLGQ), 66 to 86 (FMLF…SIFF), 91 to 111 (NYLM…LGLG), and 158 to 178 (HLSL…IFGA). RCK C-terminal domains lie at 200–288 (RGLD…SFRN) and 292–373 (VFDR…RIGF). 5 helical membrane passes run 383–403 (LLAF…TFQF), 406–426 (FSFG…LGFL), 447–467 (FGLM…IGHG), 475–495 (MLFA…LFGA), and 539–559 (YAIA…IWPG).

Belongs to the AAE transporter (TC 2.A.81) family. YbjL subfamily.

It is found in the cell membrane. The sequence is that of Putative transport protein ESA_02488 from Cronobacter sakazakii (strain ATCC BAA-894) (Enterobacter sakazakii).